Here is a 291-residue protein sequence, read N- to C-terminus: Ribosomal protein L11 methyltransferase (291 aa).

Residues Thr136, Gly159, Asp181, and Asn228 each coordinate S-adenosyl-L-methionine.

It belongs to the methyltransferase superfamily. PrmA family.

The protein localises to the cytoplasm. The catalysed reaction is L-lysyl-[protein] + 3 S-adenosyl-L-methionine = N(6),N(6),N(6)-trimethyl-L-lysyl-[protein] + 3 S-adenosyl-L-homocysteine + 3 H(+). Its function is as follows. Methylates ribosomal protein L11. This is Ribosomal protein L11 methyltransferase from Sinorhizobium fredii (strain NBRC 101917 / NGR234).